A 537-amino-acid chain; its full sequence is Zinc finger and BTB domain-containing protein 18 (537 aa).

The 68-residue stretch at Cys24 to Ser91 folds into the BTB domain. The segment covering Thr122–Ser143 has biased composition (basic and acidic residues). 2 disordered regions span residues Thr122–Ala232 and Ala335–Asp355. 2 stretches are compositionally biased toward low complexity: residues Arg182–Pro195 and Ser208–Arg229. 4 consecutive C2H2-type zinc fingers follow at residues Phe385–His407, Pro425–His447, Tyr453–His475, and His481–His504.

It belongs to the krueppel C2H2-type zinc-finger protein family. ZBTB18 subfamily.

The protein resides in the nucleus. Functionally, transcriptional repressor that plays a role in various developmental processes. Specifically binds the consensus DNA sequence 5'-[AC]ACATCTG[GT][AC]-3' which contains the E box core, and acts by recruiting chromatin remodeling multiprotein complexes. The polypeptide is Zinc finger and BTB domain-containing protein 18 (zbtb18) (Danio rerio (Zebrafish)).